Reading from the N-terminus, the 487-residue chain is mRNA cleavage and polyadenylation factor CLP1 (487 aa).

ATP-binding positions include glutamate 19, lysine 59, and 134–139 (NSGKTT).

Belongs to the Clp1 family. Clp1 subfamily. In terms of assembly, component of a pre-mRNA cleavage factor complex. Interacts directly with PCF11.

It is found in the nucleus. In terms of biological role, required for endonucleolytic cleavage during polyadenylation-dependent pre-mRNA 3'-end formation. In Laccaria bicolor (strain S238N-H82 / ATCC MYA-4686) (Bicoloured deceiver), this protein is mRNA cleavage and polyadenylation factor CLP1.